The sequence spans 588 residues: Disabled homolog 1 (588 aa).

A disordered region spans residues 1–26; that stretch reads MSTETELQVAVKTSAKKDSRKKGQDR. Residues 15-26 are compositionally biased toward basic and acidic residues; that stretch reads AKKDSRKKGQDR. A PID domain is found at 36–189; the sequence is KGEGVRYKAK…CEQAVYQTIL (154 aa). A phosphotyrosine mark is found at Tyr198, Tyr220, and Tyr232. Disordered stretches follow at residues 224–243, 420–444, 451–470, and 502–588; these read TSQKKEGVYDVPKSQPNSQP, LATVPGTNDSARSSPQSDKPRQKMG, FQMVQPPPVPSRKPDQPSLT, and LTPV…QDGS. Residues 424–436 are compositionally biased toward polar residues; the sequence is PGTNDSARSSPQS. Composition is skewed to low complexity over residues 503-512 and 523-534; these read TPVTSTTPST and SSPSKSSASHVS. Position 524 is a phosphoserine; by CDK5 (Ser524). The segment covering 537–546 has biased composition (acidic residues); that stretch reads TADDIFEEGF.

In terms of assembly, associates with the SH2 domains of SRC, FYN and ABL. Interacts (phosphorylated on tyrosine residues) with CRK and CRKL (via respective SH2 domain). Interacts with SIAH1, LRP8 and VLDLR. Interacts with LRP1. Interacts with APLP1 (via NPXY motif). Interacts with DAB2IP. Interacts with ZSWIM8. In terms of processing, phosphorylated by FYN on Tyr-198 and Tyr-220 upon reelin induction in embryonic neurons. Also found phosphorylated on Tyr-232 upon reelin induction. Also phosphorylated on Ser-524 independently of reelin signaling. Ubiquitinated by various cullin-5-RING E3 ubiquitin-protein ligase complexes (ECS complexes) following ligand-binding and phosphorylation, leading to its degradation. Ubiquitinated by the ECS(SOCS7) complex in the cortical plate of the developing cerebral cortex following ligand-binding and phosphorylation by FYN, leading to its degradation by the proteasome. Recognized by ZSWIM8 through a disorder targets misorder mechanism that eliminates misfolded DAB1 via ubiquitination and proteasomal degradation. As to expression, expressed mainly in brain. Specifically expressin in cortical neurons.

The protein resides in the cytoplasm. Its function is as follows. Signaling adapter of the reelin-mediated signaling pathway, which regulates the migration and differentiation of postmitotic neurons during brain development. Mediates intracellular transduction of Reelin signaling following reelin (RELN)-binding to its receptor: acts by docking proteins through its phosphotyrosine residues and PID domain. The sequence is that of Disabled homolog 1 from Mus musculus (Mouse).